The following is a 307-amino-acid chain: Putative F-box/LRR-repeat protein 22 (307 aa).

Over residues M1 to L15 the composition is skewed to polar residues. Residues M1 to N26 form a disordered region. Positions P24–I71 constitute an F-box domain. LRR repeat units lie at residues W108–G133, Y158–G183, W185–L210, S212–Q237, and F244–Y270. Positions I279–N289 are enriched in acidic residues. A disordered region spans residues I279–F307.

This is Putative F-box/LRR-repeat protein 22 (FBL22) from Arabidopsis thaliana (Mouse-ear cress).